Here is a 519-residue protein sequence, read N- to C-terminus: Bud site selection protein 22 (519 aa).

The disordered stretch occupies residues 241-497; sequence EKTANANQTH…STGEEHPSWI (257 aa). The span at 244–254 shows a compositional bias: polar residues; it reads ANANQTHSNID. Threonine 257 is modified (phosphothreonine). The span at 267–282 shows a compositional bias: polar residues; the sequence is DSKSNAIGAQTQSNKE. Positions 321 to 337 are enriched in acidic residues; that stretch reads VTDEEPSEASSDEDDSD. A compositionally biased stretch (basic and acidic residues) spans 338 to 348; the sequence is ERFSDSEENEP. At serine 367 the chain carries Phosphoserine. Phosphothreonine is present on threonine 371. The residue at position 375 (serine 375) is a Phosphoserine. Residues 407–420 are compositionally biased toward basic residues; that stretch reads RKNRRGQRARRKIW. Residues 426-470 are a coiled coil; that stretch reads SQAKHVQRELEKEMEDRKQRQIEYEARVAKREAKAASLEASRSRE. Basic and acidic residues-rich tracts occupy residues 431–459 and 466–497; these read VQRELEKEMEDRKQRQIEYEARVAKREAK and SRSREREDRRTETNNKKEKESASTGEEHPSWI.

It belongs to the BUD22 family.

It is found in the nucleus. Functionally, involved in positioning the proximal bud pole signal. The polypeptide is Bud site selection protein 22 (BUD22) (Saccharomyces cerevisiae (strain ATCC 204508 / S288c) (Baker's yeast)).